We begin with the raw amino-acid sequence, 233 residues long: DnaA regulatory inactivator Hda (233 aa).

The protein belongs to the DnaA family. HdA subfamily. As to quaternary structure, the active form seems to be an ADP-bound monomer. Forms the RIDA complex (regulatory inactivation of DnaA) of ATP-DnaA, ADP-Hda and the DNA-loaded beta sliding clamp (dnaN).

Its function is as follows. Mediates the interaction of DNA replication initiator protein DnaA with DNA polymerase subunit beta sliding clamp (dnaN). Stimulates hydrolysis of ATP-DnaA to ADP-DnaA, rendering DnaA inactive for reinitiation, a process called regulatory inhibition of DnaA or RIDA. This Escherichia fergusonii (strain ATCC 35469 / DSM 13698 / CCUG 18766 / IAM 14443 / JCM 21226 / LMG 7866 / NBRC 102419 / NCTC 12128 / CDC 0568-73) protein is DnaA regulatory inactivator Hda.